Here is a 122-residue protein sequence, read N- to C-terminus: MKKFNKDIGTYCENLACDYLIKNNFKILECNFKNRLGEIDIISIRNSILIIIEVKGRYNYEFGVPKESVSVSKQKNIIKVTKSYINYKKLYNFNVRFDVIEVYLNKIDSSYKINHIKDAFRT.

Belongs to the UPF0102 family.

The chain is UPF0102 protein CLH_1204 from Clostridium botulinum (strain Alaska E43 / Type E3).